We begin with the raw amino-acid sequence, 321 residues long: Protein ATP1B4 (321 aa).

Residues 1-41 (MEPGMEMNTASEGGTRRGPENKHEEKVQDPNRGEAETKAEM) form a disordered region. At 1-72 (MEPGMEMNTA…RTCMGRTAKS (72 aa)) the chain is on the cytoplasmic side. Basic and acidic residues predominate over residues 14 to 41 (GTRRGPENKHEEKVQDPNRGEAETKAEM). Residues 73–93 (WGLILLFYFIFYTCLAGMFAF) form a helical membrane-spanning segment. Topologically, residues 94–321 (CMYVMLLTLS…RIIFTLSIGK (228 aa)) are extracellular. N-linked (GlcNAc...) asparagine glycosylation is found at Asn132, Asn176, and Asn193. A disulfide bridge links Cys165 with Cys184. Cystine bridges form between Cys194-Cys210 and Cys233-Cys293. N-linked (GlcNAc...) asparagine glycans are attached at residues Asn239, Asn252, and Asn270.

This sequence belongs to the X(+)/potassium ATPases subunit beta family. Composed of two subunits: alpha (catalytic) and beta (accessory). Post-translationally, glycosylated. In terms of tissue distribution, expressed in skeletal muscle, intestine, heart, brain, retina, inner ear and skin.

The protein localises to the membrane. Its function is as follows. This is the non-catalytic component of the active enzyme, which catalyzes the hydrolysis of ATP coupled with the exchange of Na(+) and K(+) ions across the plasma membrane. This Gallus gallus (Chicken) protein is Protein ATP1B4 (ATP1B4).